We begin with the raw amino-acid sequence, 705 residues long: Polyphosphate kinase (705 aa).

ATP is bound at residue asparagine 58. Positions 389 and 419 each coordinate Mg(2+). Histidine 449 (phosphohistidine intermediate) is an active-site residue. ATP contacts are provided by tyrosine 482, arginine 578, and histidine 606.

The protein belongs to the polyphosphate kinase 1 (PPK1) family. Mg(2+) serves as cofactor. Post-translationally, an intermediate of this reaction is the autophosphorylated ppk in which a phosphate is covalently linked to a histidine residue through a N-P bond.

It catalyses the reaction [phosphate](n) + ATP = [phosphate](n+1) + ADP. Functionally, catalyzes the reversible transfer of the terminal phosphate of ATP to form a long-chain polyphosphate (polyP). The polypeptide is Polyphosphate kinase (Halalkalibacterium halodurans (strain ATCC BAA-125 / DSM 18197 / FERM 7344 / JCM 9153 / C-125) (Bacillus halodurans)).